The chain runs to 404 residues: Tryptophan synthase beta chain (404 aa).

Position 98 is an N6-(pyridoxal phosphate)lysine (Lys98).

The protein belongs to the TrpB family. As to quaternary structure, tetramer of two alpha and two beta chains. The cofactor is pyridoxal 5'-phosphate.

The enzyme catalyses (1S,2R)-1-C-(indol-3-yl)glycerol 3-phosphate + L-serine = D-glyceraldehyde 3-phosphate + L-tryptophan + H2O. The protein operates within amino-acid biosynthesis; L-tryptophan biosynthesis; L-tryptophan from chorismate: step 5/5. Its function is as follows. The beta subunit is responsible for the synthesis of L-tryptophan from indole and L-serine. This Rhodopseudomonas palustris (strain HaA2) protein is Tryptophan synthase beta chain.